The chain runs to 404 residues: Starvation-sensing protein RspA (404 aa).

Belongs to the mandelate racemase/muconate lactonizing enzyme family.

Probably involved in the degradation of homoserine lactone (HSL) or of a metabolite of HSL that signals starvation. This chain is Starvation-sensing protein RspA, found in Escherichia coli (strain K12).